The primary structure comprises 313 residues: HPr kinase/phosphorylase (313 aa).

Residues His-141 and Lys-162 contribute to the active site. Residue 156-163 (GKSGIGKS) participates in ATP binding. Position 163 (Ser-163) interacts with Mg(2+). Asp-180 functions as the Proton acceptor; for phosphorylation activity. Proton donor; for dephosphorylation activity in the catalytic mechanism. The interval 203 to 212 (IEIRGIGIFD) is important for the catalytic mechanism of both phosphorylation and dephosphorylation. Glu-204 provides a ligand contact to Mg(2+). The active site involves Arg-247. Residues 268–273 (PVSAGR) form an important for the catalytic mechanism of dephosphorylation region.

The protein belongs to the HPrK/P family. In terms of assembly, homohexamer. The cofactor is Mg(2+).

The catalysed reaction is [HPr protein]-L-serine + ATP = [HPr protein]-O-phospho-L-serine + ADP + H(+). The enzyme catalyses [HPr protein]-O-phospho-L-serine + phosphate + H(+) = [HPr protein]-L-serine + diphosphate. Its function is as follows. Catalyzes the ATP- as well as the pyrophosphate-dependent phosphorylation of a specific serine residue in HPr, a phosphocarrier protein of the phosphoenolpyruvate-dependent sugar phosphotransferase system (PTS). HprK/P also catalyzes the pyrophosphate-producing, inorganic phosphate-dependent dephosphorylation (phosphorolysis) of seryl-phosphorylated HPr (P-Ser-HPr). The two antagonistic activities of HprK/P are regulated by several intracellular metabolites, which change their concentration in response to the absence or presence of rapidly metabolisable carbon sources (glucose, fructose, etc.) in the growth medium. Therefore, by controlling the phosphorylation state of HPr, HPrK/P is a sensor enzyme that plays a major role in the regulation of carbon metabolism and sugar transport: it mediates carbon catabolite repression (CCR), and regulates PTS-catalyzed carbohydrate uptake and inducer exclusion. This Mycoplasma mycoides subsp. mycoides SC (strain CCUG 32753 / NCTC 10114 / PG1) protein is HPr kinase/phosphorylase.